A 130-amino-acid polypeptide reads, in one-letter code: Small ribosomal subunit protein uS11 (130 aa).

It belongs to the universal ribosomal protein uS11 family. As to quaternary structure, part of the 30S ribosomal subunit. Interacts with proteins S7 and S18. Binds to IF-3.

Located on the platform of the 30S subunit, it bridges several disparate RNA helices of the 16S rRNA. Forms part of the Shine-Dalgarno cleft in the 70S ribosome. The polypeptide is Small ribosomal subunit protein uS11 (Kosmotoga olearia (strain ATCC BAA-1733 / DSM 21960 / TBF 19.5.1)).